Consider the following 1605-residue polypeptide: GTPase-activating protein pac-1 (1605 aa).

The segment at 1–574 is required for localization to adherens junctions; the sequence is MEEHHRRLHV…QRFIALFNSS (574 aa). Disordered regions lie at residues 293–430, 529–556, and 574–593; these read QRHP…ISTS, MRSG…LNAP, and SKTS…RSRT. Over residues 323-334 the composition is skewed to basic and acidic residues; the sequence is SKEDPSEDTGHD. Low complexity-rich tracts occupy residues 353-365, 420-430, and 530-552; these read RNAS…SSRS, TTSSTSSISTS, and RSGG…TSRS. A PH domain is found at 599–726; it reads RFALPGTILQ…WISVLQSSSE (128 aa). Composition is skewed to polar residues over residues 728–745 and 846–855; these read GIAT…TTGR and KNSQLQSPTA. Disordered stretches follow at residues 728-752 and 846-942; these read GIAT…NAVS and KNSQ…AGAP. Residues 868–879 are compositionally biased toward low complexity; sequence SSSQTMATTSSS. A compositionally biased stretch (basic residues) spans 908-917; that stretch reads SGRKWKKSKA. Low complexity predominate over residues 928–941; it reads GSSSGSQQQGAAGA. Positions 948–1146 constitute a Rho-GAP domain; that stretch reads VRIADCPTGS…TLIHYNLWMF (199 aa). Disordered stretches follow at residues 1152–1176, 1207–1258, 1277–1339, 1438–1533, and 1554–1605; these read TEDA…YGVG, EGKG…AASV, SRQT…RRKR, TSDY…ARRH, and GIRK…DELL. Positions 1211–1229 are enriched in basic residues; that stretch reads QKIKNMLRRNSRRDKSKSK. Composition is skewed to polar residues over residues 1244–1257 and 1278–1300; these read GWTQ…SAAS and RQTV…RLDQ. Low complexity predominate over residues 1301–1312; it reads SPSLESSLGSLP. Polar residues predominate over residues 1438–1453; the sequence is TSDYSTTSSAPLSTNP. The segment covering 1461-1476 has biased composition (low complexity); it reads DQPNSSSDYASSDPSP. Polar residues-rich tracts occupy residues 1480-1493 and 1500-1515; these read NPST…SNLA and HATS…MSRS. Basic and acidic residues predominate over residues 1558-1575; that stretch reads SSPDVSRDEVSDDEKNHQ.

As to quaternary structure, associated with the catenin-cadherin complex consisting of hmr-1, hmp-1 and hmp-2; this is mediated by interaction with picc-1.

It localises to the cytoplasm. The protein localises to the cell junction. It is found in the adherens junction. In terms of biological role, GTPase-activating protein for members of the Rho subfamily including Rac1, RhoA and cdc42 and other Ras-related subfamilies including let-60. Mediates radial (inner-outer) polarity and gastrulation by excluding par-6 from contacted cell surfaces; acts by inactivating cdc42 at inner cell surfaces which limits active cdc42 to outer cell surfaces devoid of cell-cell contacts, where cdc42 can bind and recruit par-6. Required for blastomere polarization. The chain is GTPase-activating protein pac-1 (pac-1) from Caenorhabditis elegans.